A 164-amino-acid chain; its full sequence is Peptide deformylase-like (164 aa).

Glutamate 133 is an active-site residue.

This sequence belongs to the polypeptide deformylase family.

This Agrobacterium fabrum (strain C58 / ATCC 33970) (Agrobacterium tumefaciens (strain C58)) protein is Peptide deformylase-like.